Consider the following 142-residue polypeptide: Coactosin-like protein (142 aa).

A2 carries the post-translational modification N-acetylalanine. Residues 2-130 (ATKIDKEACR…EEDFIRSELK (129 aa)) enclose the ADF-H domain. Residues 66–75 (TGDAMSKRSK) are flexible and important for F-actin binding. K102 is subject to N6-acetyllysine. At S141 the chain carries Phosphoserine.

It belongs to the actin-binding proteins ADF family. Coactosin subfamily. Interacts with 5-lipoxygenase (ALOX5/5LO) in a calcium-independent manner. Binds to F-actin with a stoichiometry of 1:2.

The protein resides in the cytoplasm. Its subcellular location is the cytoskeleton. The protein localises to the nucleus. Binds to F-actin in a calcium-independent manner. Has no direct effect on actin depolymerization. Acts as a chaperone for ALOX5 (5LO), influencing both its stability and activity in leukotrienes synthesis. This is Coactosin-like protein (Cotl1) from Mus musculus (Mouse).